The primary structure comprises 180 residues: uncharacterized protein (180 aa).

It is found in the mitochondrion. This is an uncharacterized protein from Marchantia polymorpha (Common liverwort).